The sequence spans 137 residues: Large ribosomal subunit protein uL16 (137 aa).

Belongs to the universal ribosomal protein uL16 family. In terms of assembly, part of the 50S ribosomal subunit.

Binds 23S rRNA and is also seen to make contacts with the A and possibly P site tRNAs. This chain is Large ribosomal subunit protein uL16, found in Lactococcus lactis subsp. cremoris (strain SK11).